The following is a 395-amino-acid chain: METRTLEDWRALLEAEKTLDSGVYNKHDLLIVRGQGARVWDAEGNEYIDCVGGYGVANLGHGNPEVVEAVKRQAETLMAMPQTLPTPMRGEFYRTLTAILPPELNRVFPVNSGTEANEAALKFARAHTGRKKFVAAMRGFSGRTMGSLSVTWEPKYREPFLPLVEPVEFIPYNDVEALKRAVDEETAAVILEPVQGEGGVRPATPEFLRAAREITQEKGALLILDEIQTGMGRTGKRFAFEHFGIVPDILTLAKALGGGVPLGAAVMREEVARSMPKGGHGTTFGGNPLAMAAGVAAIRYLERTRLWERAAELGPWFMEKLRAIPSPKIREVRGMGLMVGLELKEKAAPYIARLEKEHRVLALQAGPTVIRFLPPLVIEKEDLERVVEAVRAVLA.

Residues 113–114 and F140 each bind pyridoxal 5'-phosphate; that span reads GT. A substrate-binding site is contributed by R143. Position 225-228 (225-228) interacts with pyridoxal 5'-phosphate; that stretch reads DEIQ. At K254 the chain carries N6-(pyridoxal phosphate)lysine. Substrate is bound at residue T282. T283 provides a ligand contact to pyridoxal 5'-phosphate.

It belongs to the class-III pyridoxal-phosphate-dependent aminotransferase family. LysJ subfamily. In terms of assembly, homodimer. Requires pyridoxal 5'-phosphate as cofactor.

The protein resides in the cytoplasm. It catalyses the reaction [amino-group carrier protein]-C-terminal-gamma-(L-lysyl)-L-glutamate + 2-oxoglutarate = [amino-group carrier protein]-C-terminal-N-(1-carboxy-5-oxopentan-1-yl)-L-glutamine + L-glutamate. The protein operates within amino-acid biosynthesis; L-lysine biosynthesis via AAA pathway; L-lysine from L-alpha-aminoadipate (Thermus route): step 4/5. Its function is as follows. Catalyzes the transfer of the amino group of L-glutamate to [LysW]-aminoadipate 6-semialdehyde, generating [LysW]-gamma-L-lysine. The polypeptide is [LysW]-aminoadipate semialdehyde transaminase (Thermus thermophilus (strain ATCC 27634 / DSM 579 / HB8)).